The primary structure comprises 170 residues: Phosphopantetheine adenylyltransferase (170 aa).

Thr-9 is a binding site for substrate. ATP-binding positions include 9 to 10 and His-17; that span reads TF. Positions 41, 73, and 87 each coordinate substrate. ATP-binding positions include 88–90, Glu-98, and 123–129; these read GLR and YQFISGT.

This sequence belongs to the bacterial CoaD family. In terms of assembly, homohexamer. The cofactor is Mg(2+).

The protein resides in the cytoplasm. It carries out the reaction (R)-4'-phosphopantetheine + ATP + H(+) = 3'-dephospho-CoA + diphosphate. It functions in the pathway cofactor biosynthesis; coenzyme A biosynthesis; CoA from (R)-pantothenate: step 4/5. Functionally, reversibly transfers an adenylyl group from ATP to 4'-phosphopantetheine, yielding dephospho-CoA (dPCoA) and pyrophosphate. In Bordetella petrii (strain ATCC BAA-461 / DSM 12804 / CCUG 43448), this protein is Phosphopantetheine adenylyltransferase.